Consider the following 285-residue polypeptide: RNA polymerase sigma factor RpoH (285 aa).

The sigma-70 factor domain-2 stretch occupies residues 53–122; sequence LILSHLRFVV…IHEYVLRNWR (70 aa). The short motif at 77–80 is the Interaction with polymerase core subunit RpoC element; it reads DLIQ. The interval 229-281 is sigma-70 factor domain-4; the sequence is AMEGLDERSQDIIRARWLDEDNKSTLQELADRYGVSAERVRQLEKNAMKKLRA. Residues 254-273 constitute a DNA-binding region (H-T-H motif); that stretch reads LQELADRYGVSAERVRQLEK.

Belongs to the sigma-70 factor family. RpoH subfamily. Interacts with the RNA polymerase core enzyme.

It localises to the cytoplasm. In terms of biological role, sigma factors are initiation factors that promote the attachment of RNA polymerase to specific initiation sites and are then released. This sigma factor is involved in regulation of expression of heat shock genes. This Enterobacter cloacae protein is RNA polymerase sigma factor RpoH.